Consider the following 188-residue polypeptide: Photosystem I assembly protein Ycf4 (188 aa).

The next 2 helical transmembrane spans lie at 26 to 46 and 68 to 88; these read YFWA…GLSS and LVMG…WFVI.

This sequence belongs to the Ycf4 family.

Its subcellular location is the cellular thylakoid membrane. Seems to be required for the assembly of the photosystem I complex. The chain is Photosystem I assembly protein Ycf4 from Synechococcus elongatus (strain ATCC 33912 / PCC 7942 / FACHB-805) (Anacystis nidulans R2).